Here is an 84-residue protein sequence, read N- to C-terminus: Small ribosomal subunit protein eS27-like (84 aa).

The segment covering methionine 1–lysine 16 has biased composition (basic and acidic residues). A disordered region spans residues methionine 1 to arginine 23. The C4-type zinc-finger motif lies at proline 38 to serine 60.

This sequence belongs to the eukaryotic ribosomal protein eS27 family. The cofactor is Zn(2+).

In Mus musculus (Mouse), this protein is Small ribosomal subunit protein eS27-like.